A 59-amino-acid chain; its full sequence is Large ribosomal subunit protein uL30 (59 aa).

Belongs to the universal ribosomal protein uL30 family. Part of the 50S ribosomal subunit.

The sequence is that of Large ribosomal subunit protein uL30 from Shewanella amazonensis (strain ATCC BAA-1098 / SB2B).